The following is a 279-amino-acid chain: Movement protein (279 aa).

A compositionally biased stretch (low complexity) spans 256–266; the sequence is PPIAIGSPSAS. The disordered stretch occupies residues 256–279; it reads PPIAIGSPSASRNNSFRSQVVNGL. The segment covering 267 to 279 has biased composition (polar residues); the sequence is RNNSFRSQVVNGL.

Belongs to the cucumovirus movement protein family.

Its subcellular location is the host cell junction. It localises to the host plasmodesma. Its function is as follows. Transports viral genome to neighboring plant cells directly through plasmosdesmata, without any budding. The movement protein allows efficient cell to cell propagation, by bypassing the host cell wall barrier. Acts by forming a tubular structure at the host plasmodesmata, enlarging it enough to allow free passage of virion capsids. The sequence is that of Movement protein from Cucumis sativus (Cucumber).